A 360-amino-acid polypeptide reads, in one-letter code: MKPFLRSQLERYAQRLEELDFLLSREDIMSDMAQYRTISREHAEVTQVAGRYTRYRQREADLAGAREMLDDPDMADMAREEIAAAEAELVQLEDELQRLLLPRDPDEARNAFLEIRAGTGGDESALFAGDLARMYTRYAATAGWKVEILSASDNEIGGYKEVVLRVEGDGVYGALRFESGGHRVQRVPATETQGRIHTSACTVAVMPEPDEQQAITLNPADLRIDTFRASGAGGQHINKTDSAVRVVHLPTGIVAECQDGRSQHSNKAKALQVLQARIQEKERSERAAKEAALRKGLVGSGDRSDRIRTYNFPQGRLTDHRINLTLYKLLAIMEGDLGEVLEALRHAREAELLAELESAA.

N5-methylglutamine is present on Gln235.

This sequence belongs to the prokaryotic/mitochondrial release factor family. Methylated by PrmC. Methylation increases the termination efficiency of RF1.

It localises to the cytoplasm. In terms of biological role, peptide chain release factor 1 directs the termination of translation in response to the peptide chain termination codons UAG and UAA. The chain is Peptide chain release factor 1 from Paracidovorax citrulli (strain AAC00-1) (Acidovorax citrulli).